Reading from the N-terminus, the 129-residue chain is Small ribosomal subunit protein uS11 (129 aa).

A disordered region spans residues 109 to 129; it reads VDDTPVPHNGCRPKKKFRKAS. A compositionally biased stretch (basic residues) spans 119-129; the sequence is CRPKKKFRKAS.

This sequence belongs to the universal ribosomal protein uS11 family. In terms of assembly, part of the 30S ribosomal subunit. Interacts with proteins S7 and S18. Binds to the C-terminus of IF-3; however exactly how IF-3 interacts with the 30S subunit is unclear.

Its function is as follows. Located on the upper part of the platform of the 30S subunit, where it bridges several disparate RNA helices of the 16S rRNA. Forms part of the Shine-Dalgarno cleft in the 70S ribosome. This is Small ribosomal subunit protein uS11 (rpsK) from Thermus thermophilus (strain ATCC BAA-163 / DSM 7039 / HB27).